Consider the following 83-residue polypeptide: NADH dehydrogenase [ubiquinone] iron-sulfur protein 5-B (83 aa).

The CHCH domain occupies 11 to 52; sequence KGRCYDFWMDFSECMSHCREPKDCTLLREDYLECLHHSKEFQ. Short sequence motifs (cx9C motif) lie at residues 14-24 and 34-44; these read CYDFWMDFSEC and CTLLREDYLEC. Intrachain disulfides connect C14–C44 and C24–C34. Residues 62–83 are disordered; that stretch reads QRKLRAASRKGEETGDGTHTHH.

It belongs to the complex I NDUFS5 subunit family. In terms of assembly, complex I is composed of at least 49 different subunits. This is a component of the iron-sulfur (IP) fragment of the enzyme.

The protein resides in the mitochondrion. Its subcellular location is the mitochondrion inner membrane. The protein localises to the mitochondrion intermembrane space. Functionally, accessory subunit of the mitochondrial membrane respiratory chain NADH dehydrogenase (Complex I), that is believed not to be involved in catalysis. Complex I functions in the transfer of electrons from NADH to the respiratory chain. The immediate electron acceptor for the enzyme is believed to be ubiquinone. This chain is NADH dehydrogenase [ubiquinone] iron-sulfur protein 5-B, found in Arabidopsis thaliana (Mouse-ear cress).